We begin with the raw amino-acid sequence, 1154 residues long: DNA-directed RNA polymerase subunit beta' (1154 aa).

Zn(2+) is bound by residues cysteine 60, cysteine 62, cysteine 75, and cysteine 78. Residues aspartate 449, aspartate 451, and aspartate 453 each coordinate Mg(2+). Zn(2+) contacts are provided by cysteine 774, cysteine 848, cysteine 855, and cysteine 858.

Belongs to the RNA polymerase beta' chain family. In terms of assembly, the RNAP catalytic core consists of 2 alpha, 1 beta, 1 beta' and 1 omega subunit. When a sigma factor is associated with the core the holoenzyme is formed, which can initiate transcription. The cofactor is Mg(2+). Zn(2+) is required as a cofactor.

The enzyme catalyses RNA(n) + a ribonucleoside 5'-triphosphate = RNA(n+1) + diphosphate. Functionally, DNA-dependent RNA polymerase catalyzes the transcription of DNA into RNA using the four ribonucleoside triphosphates as substrates. The protein is DNA-directed RNA polymerase subunit beta' of Desulforudis audaxviator (strain MP104C).